We begin with the raw amino-acid sequence, 96 residues long: Glycine-rich protein DC7.1 (96 aa).

The first 25 residues, 1–25 (MGSKIFLLLGLSIAFALLISSEVAA), serve as a signal peptide directing secretion. The tract at residues 29-66 (SETTTEGASLDGGHHGGGGGGHYSGGGGHGGSHHGGGG) is disordered. 2 tandem repeats follow at residues 42-50 (HHGGGGGGH) and 61-67 (HHGGGGH). The segment at 42-67 (HHGGGGGGHYSGGGGHGGSHHGGGGH) is 2 approximate repeats of H-H-G(4,6)-H. Residues 43 to 66 (HGGGGGGHYSGGGGHGGSHHGGGG) are compositionally biased toward gly residues.

The protein belongs to the GRP family.

Its function is as follows. May be connected with the initiation of embryogenesis or with the metabolic changes produced by the removal of auxins. In Daucus carota (Wild carrot), this protein is Glycine-rich protein DC7.1.